Consider the following 561-residue polypeptide: uncharacterized protein (561 aa).

The next 2 helical transmembrane spans lie at 29–49 and 80–100; these read FIFN…KKII and FLFH…AVVI.

It is found in the cell membrane. This is an uncharacterized protein from Mycoplasma pneumoniae (strain ATCC 29342 / M129 / Subtype 1) (Mycoplasmoides pneumoniae).